A 236-amino-acid polypeptide reads, in one-letter code: Ribosomal RNA small subunit methyltransferase G (236 aa).

S-adenosyl-L-methionine is bound by residues glycine 80, 131-132 (AE), and arginine 148.

This sequence belongs to the methyltransferase superfamily. RNA methyltransferase RsmG family.

Its subcellular location is the cytoplasm. In terms of biological role, specifically methylates the N7 position of a guanine in 16S rRNA. In Ureaplasma parvum serovar 3 (strain ATCC 27815 / 27 / NCTC 11736), this protein is Ribosomal RNA small subunit methyltransferase G.